The chain runs to 91 residues: ATP synthase subunit c (91 aa).

2 helical membrane-spanning segments follow: residues 4–24 and 53–73; these read FTMCVLAAGIGMALGTLGTGI and IGLAMIESLAIYALVVCLIIL.

The protein belongs to the ATPase C chain family. As to quaternary structure, F-type ATPases have 2 components, F(1) - the catalytic core - and F(0) - the membrane proton channel. F(1) has five subunits: alpha(3), beta(3), gamma(1), delta(1), epsilon(1). F(0) has three main subunits: a(1), b(2) and c(10-14). The alpha and beta chains form an alternating ring which encloses part of the gamma chain. F(1) is attached to F(0) by a central stalk formed by the gamma and epsilon chains, while a peripheral stalk is formed by the delta and b chains.

Its subcellular location is the cell inner membrane. Functionally, f(1)F(0) ATP synthase produces ATP from ADP in the presence of a proton or sodium gradient. F-type ATPases consist of two structural domains, F(1) containing the extramembraneous catalytic core and F(0) containing the membrane proton channel, linked together by a central stalk and a peripheral stalk. During catalysis, ATP synthesis in the catalytic domain of F(1) is coupled via a rotary mechanism of the central stalk subunits to proton translocation. Key component of the F(0) channel; it plays a direct role in translocation across the membrane. A homomeric c-ring of between 10-14 subunits forms the central stalk rotor element with the F(1) delta and epsilon subunits. The chain is ATP synthase subunit c from Geotalea daltonii (strain DSM 22248 / JCM 15807 / FRC-32) (Geobacter daltonii).